The sequence spans 146 residues: Hemoglobin subunit beta (146 aa).

Residues 2–146 enclose the Globin domain; the sequence is HWTADEKQLI…VAHALALGYH (145 aa). The heme b site is built by H63 and H92.

Belongs to the globin family. Heterotetramer of two alpha chains and two beta chains. As to expression, red blood cells.

Functionally, involved in oxygen transport from the lung to the various peripheral tissues. This Chrysemys picta bellii (Western painted turtle) protein is Hemoglobin subunit beta (HBB).